We begin with the raw amino-acid sequence, 423 residues long: UPF0229 protein PFLU_5583 (423 aa).

A disordered region spans residues 64-109 (LHHGRGGKQTVVHPGNKEFTTGEHIQRPQGGGGGKGPGKAGNSGEG). Residues 92-107 (QGGGGGKGPGKAGNSG) show a composition bias toward gly residues.

This sequence belongs to the UPF0229 family.

The sequence is that of UPF0229 protein PFLU_5583 from Pseudomonas fluorescens (strain SBW25).